The chain runs to 604 residues: uncharacterized protein (604 aa).

Residues 1–40 (MWLQQRIKVFPGLLSSSWARRVLAVSGFLVIIYWYIFSGS) form the signal peptide. At 41 to 563 (HYRSFWYSGK…EEHMAKQYRG (523 aa)) the chain is on the extracellular side. N-linked (GlcNAc...) asparagine glycosylation is present at Asn337. A helical transmembrane segment spans residues 564–584 (LPFLFWFSVASLITLFHLFLF). Residues 585–604 (KLIYNEYCGPGAKPLFRSKV) are Cytoplasmic-facing.

It is found in the membrane. This is an uncharacterized protein from Xenopus laevis (African clawed frog).